The chain runs to 197 residues: Ribonuclease HII (197 aa).

The 184-residue stretch at 14-197 folds into the RNase H type-2 domain; sequence EKIVGIDEAG…RSFNLGVNDD (184 aa). Residues Asp-20, Glu-21, and Asp-112 each contribute to the a divalent metal cation site.

The protein belongs to the RNase HII family. Mn(2+) is required as a cofactor. Requires Mg(2+) as cofactor.

It is found in the cytoplasm. The enzyme catalyses Endonucleolytic cleavage to 5'-phosphomonoester.. Functionally, endonuclease that specifically degrades the RNA of RNA-DNA hybrids. The sequence is that of Ribonuclease HII from Sulfurihydrogenibium sp. (strain YO3AOP1).